Here is a 348-residue protein sequence, read N- to C-terminus: Small ribosomal subunit biogenesis GTPase RsgA (348 aa).

Residues M1–I14 show a composition bias toward basic residues. The interval M1 to G39 is disordered. Positions K16–Q31 are enriched in basic and acidic residues. Residues F116–F275 form the CP-type G domain. Residues N163–D166 and G217–S225 each bind GTP. C299, C304, H306, and C312 together coordinate Zn(2+).

Belongs to the TRAFAC class YlqF/YawG GTPase family. RsgA subfamily. As to quaternary structure, monomer. Associates with 30S ribosomal subunit, binds 16S rRNA. It depends on Zn(2+) as a cofactor.

It localises to the cytoplasm. Its function is as follows. One of several proteins that assist in the late maturation steps of the functional core of the 30S ribosomal subunit. Helps release RbfA from mature subunits. May play a role in the assembly of ribosomal proteins into the subunit. Circularly permuted GTPase that catalyzes slow GTP hydrolysis, GTPase activity is stimulated by the 30S ribosomal subunit. The sequence is that of Small ribosomal subunit biogenesis GTPase RsgA from Hahella chejuensis (strain KCTC 2396).